Reading from the N-terminus, the 906-residue chain is Coatomer subunit beta' (906 aa).

WD repeat units follow at residues 13–52 (ARSD…LVKT), 55–94 (VCDL…RVHM), 97–136 (AHSD…SCSQ), 140–180 (GHTH…PNFT), 183–224 (GHEK…CVQT), 227–266 (GHAQ…LEST), 350–388 (SCEI…NKSF), and 390–425 (SAQE…KSFK). Lysine 627 carries the post-translational modification N6-acetyllysine. One copy of the WD 9 repeat lies at 746–783 (IRTGRLPEAAFLARTYLPSQVSRVVKLWRENLSKVNQK). The interval 837-862 (EEAKGFQPSRSTAQQELDGKPASPTP) is disordered. The residue at position 859 (serine 859) is a Phosphoserine. Phosphothreonine is present on threonine 861. The stretch at 866-890 (ASHTANKEEKSLLELEVDLDNLELE) forms a coiled coil.

The protein belongs to the WD repeat COPB2 family. In terms of assembly, oligomeric complex that consists of at least the alpha, beta, beta', gamma, delta, epsilon and zeta subunits. Probably interacts with PEX11A. Interacts with SCYL1. Interacts with JAGN1.

It is found in the cytoplasm. The protein localises to the cytosol. Its subcellular location is the golgi apparatus membrane. The protein resides in the cytoplasmic vesicle. It localises to the COPI-coated vesicle membrane. Functionally, the coatomer is a cytosolic protein complex that binds to dilysine motifs and reversibly associates with Golgi non-clathrin-coated vesicles, which further mediate biosynthetic protein transport from the ER, via the Golgi up to the trans Golgi network. Coatomer complex is required for budding from Golgi membranes, and is essential for the retrograde Golgi-to-ER transport of dilysine-tagged proteins. In mammals, the coatomer can only be recruited by membranes associated to ADP-ribosylation factors (ARFs), which are small GTP-binding proteins; the complex also influences the Golgi structural integrity, as well as the processing, activity, and endocytic recycling of LDL receptors. In terms of biological role, this coatomer complex protein, essential for Golgi budding and vesicular trafficking, is a selective binding protein (RACK) for protein kinase C, epsilon type. It binds to Golgi membranes in a GTP-dependent manner. This chain is Coatomer subunit beta' (COPB2), found in Macaca fascicularis (Crab-eating macaque).